Consider the following 150-residue polypeptide: Flagellar assembly factor FliW (150 aa).

It belongs to the FliW family. In terms of assembly, interacts with translational regulator CsrA and flagellin(s).

It is found in the cytoplasm. Its function is as follows. Acts as an anti-CsrA protein, binds CsrA and prevents it from repressing translation of its target genes, one of which is flagellin. Binds to flagellin and participates in the assembly of the flagellum. This chain is Flagellar assembly factor FliW, found in Leptospira borgpetersenii serovar Hardjo-bovis (strain L550).